The sequence spans 334 residues: Ketol-acid reductoisomerase (NADP(+)) (334 aa).

In terms of domain architecture, KARI N-terminal Rossmann spans 1 to 181 (MNRYYDKNAD…GGGRTGILET (181 aa)). NADP(+) is bound by residues 24-27 (YGSQ), arginine 47, serine 50, serine 52, and 82-85 (DEFQ). The active site involves histidine 107. Residue glycine 133 participates in NADP(+) binding. The KARI C-terminal knotted domain occupies 182–323 (SFKDETETDL…ESLRSMMPWI (142 aa)). Residues aspartate 190, glutamate 194, glutamate 226, and glutamate 230 each contribute to the Mg(2+) site. Serine 251 is a substrate binding site.

It belongs to the ketol-acid reductoisomerase family. Mg(2+) serves as cofactor.

It catalyses the reaction (2R)-2,3-dihydroxy-3-methylbutanoate + NADP(+) = (2S)-2-acetolactate + NADPH + H(+). The enzyme catalyses (2R,3R)-2,3-dihydroxy-3-methylpentanoate + NADP(+) = (S)-2-ethyl-2-hydroxy-3-oxobutanoate + NADPH + H(+). The protein operates within amino-acid biosynthesis; L-isoleucine biosynthesis; L-isoleucine from 2-oxobutanoate: step 2/4. Its pathway is amino-acid biosynthesis; L-valine biosynthesis; L-valine from pyruvate: step 2/4. Functionally, involved in the biosynthesis of branched-chain amino acids (BCAA). Catalyzes an alkyl-migration followed by a ketol-acid reduction of (S)-2-acetolactate (S2AL) to yield (R)-2,3-dihydroxy-isovalerate. In the isomerase reaction, S2AL is rearranged via a Mg-dependent methyl migration to produce 3-hydroxy-3-methyl-2-ketobutyrate (HMKB). In the reductase reaction, this 2-ketoacid undergoes a metal-dependent reduction by NADPH to yield (R)-2,3-dihydroxy-isovalerate. This is Ketol-acid reductoisomerase (NADP(+)) from Ruthia magnifica subsp. Calyptogena magnifica.